The sequence spans 261 residues: tRNA pseudouridine synthase A (261 aa).

Asp51 functions as the Nucleophile in the catalytic mechanism. Tyr109 lines the substrate pocket.

Belongs to the tRNA pseudouridine synthase TruA family. As to quaternary structure, homodimer.

It catalyses the reaction uridine(38/39/40) in tRNA = pseudouridine(38/39/40) in tRNA. Formation of pseudouridine at positions 38, 39 and 40 in the anticodon stem and loop of transfer RNAs. This Shewanella sp. (strain MR-4) protein is tRNA pseudouridine synthase A.